Here is a 274-residue protein sequence, read N- to C-terminus: Serine/threonine-protein kinase 1 (274 aa).

The region spanning 16 to 273 (AVLAPKVVNG…HSFLASRHDY (258 aa)) is the Protein kinase domain. ATP contacts are provided by residues 22 to 30 (VVNGRFGKM) and Lys46. Residue Asp134 is the Proton acceptor of the active site.

It belongs to the protein kinase superfamily. Ser/Thr protein kinase family.

It catalyses the reaction L-seryl-[protein] + ATP = O-phospho-L-seryl-[protein] + ADP + H(+). It carries out the reaction L-threonyl-[protein] + ATP = O-phospho-L-threonyl-[protein] + ADP + H(+). In Orgyia pseudotsugata multicapsid polyhedrosis virus (OpMNPV), this protein is Serine/threonine-protein kinase 1 (PK1).